The following is a 176-amino-acid chain: MSEKPASMYRKIDKPSYTRRDYVTGIPGSKIAQHKMGDLQADADDYPVQISLVPQEECQLRHGSLEAARLSANRHLIKELGEGNYKMQLRKFPHQIIRENKQATGAGADRVSDGMRQAFGVPVGTAARIQPGDQLFTAYCEVEQAAAVKEAFRRAYNKITPPCKINVERGETLLVR.

Belongs to the universal ribosomal protein uL16 family.

This chain is Large ribosomal subunit protein uL16, found in Halobacterium salinarum (strain ATCC 29341 / DSM 671 / R1).